The primary structure comprises 1118 residues: Sodium-driven chloride bicarbonate exchanger (1118 aa).

Disordered regions lie at residues 1–23 (MEIK…EEAV) and 58–97 (GRKS…TPSQ). The Cytoplasmic segment spans residues 1–509 (MEIKDQGAQM…DFRDAFSLQC (509 aa)). A compositionally biased stretch (basic residues) spans 59-76 (RKSHRRHRHRGHKHRKRD). Positions 77–90 (RERDSGLEDGRESP) are enriched in basic and acidic residues. At Ser-89 the chain carries Phosphoserine. Residue Thr-94 is modified to Phosphothreonine. Zn(2+) is bound by residues His-221 and His-223. Disordered regions lie at residues 269–310 (AENK…KGPP) and 457–476 (NGTA…GPEL). Ser-276 bears the Phosphoserine mark. A helical transmembrane segment spans residues 510 to 530 (LASFLFLYCACMSPVITFGGL). Over 531-538 (LGEATEGR) the chain is Extracellular. The helical transmembrane segment at 539–559 (ISAIESLFGASMTGIAYSLFG) threads the bilayer. The Cytoplasmic portion of the chain corresponds to 560-562 (GQP). Residues 563 to 583 (LTILGSTGPVLVFEKILFKFC) traverse the membrane as a helical segment. The Extracellular portion of the chain corresponds to 584 to 596 (KEYGLSYLSLRAS). Residues 597-617 (IGLWTATLCIILVATDASSLV) traverse the membrane as a helical segment. The Cytoplasmic segment spans residues 618-626 (CYITRFTEE). The chain crosses the membrane as a helical span at residues 627–647 (AFASLICIIFIYEALEKLFEL). Over 648 to 720 (SETYPINMHN…VGRACGHGHP (73 aa)) the chain is Extracellular. Residues Asn-677, Asn-687, and Asn-697 are each glycosylated (N-linked (GlcNAc...) asparagine). The chain crosses the membrane as a helical span at residues 721-741 (YVPDVLFWSVILFFSTVTMSA). Over 742–762 (TLKQFKTSRYFPTKVRSIVSD) the chain is Cytoplasmic. The chain crosses the membrane as a helical span at residues 763–783 (FAVFLTILCMVLIDYAIGIPS). The Extracellular segment spans residues 784–809 (PKLQVPSVFKPTRDDRGWFVTPLGPN). A helical transmembrane segment spans residues 810–830 (PWWTIIAAIIPALLCTILIFM). Topologically, residues 831-855 (DQQITAVIINRKEHKLKKGCGYHLD) are cytoplasmic. The helical transmembrane segment at 856–876 (LLMVAVMLGVCSIMGLPWFVA) threads the bilayer. The Extracellular portion of the chain corresponds to 877–912 (ATVLSITHVNSLKLESECSAPGEQPKFLGIREQRVT). The helical transmembrane segment at 913-933 (GLMIFILMGSSVFMTSILKFI) threads the bilayer. Over 934 to 935 (PM) the chain is Cytoplasmic. The chain crosses the membrane as a helical span at residues 936–956 (PVLYGVFLYMGASSLKGIQLF). Residues 957 to 998 (DRIKLFWMPAKHQPDFIYLRHVPLRKVHLFTVIQMSCLGLLW) lie on the Extracellular side of the membrane. Residues 999–1019 (IIKVSRAAIVFPMMVLALVFV) traverse the membrane as a helical segment. At 1020-1118 (RKLMDFLFTK…SRFPSKSSPS (99 aa)) the chain is on the cytoplasmic side. Residues Ser-1057 and Ser-1085 each carry the phosphoserine modification.

The protein belongs to the anion exchanger (TC 2.A.31) family. Post-translationally, N-glycosylated. In the brain, detected in cerebral cortex, subcortex, cerebellum, hippocampus and medulla (at protein level). In the cerebrum, expressed at high levels throughout the cortex, at lower levels in striatum and not detectable in the corpus callosum (at protein level). In the cerebellum, detected at high levels in the molecular layer but at very low levels in the granular layer (at protein level). In the central nervous system, detected in neurons in the olfactory bulb, cortex and cerebellum (at protein level). Within the hippocampus, abundantly expressed in CA3 pyramidal cells (at protein level). Strongly expressed in the retina with high levels in bipolar and amacrine cells (at protein level). Expressed in the epithelial cells of the choroid plexus. During embryonic development, expressed in neurons of the central nervous system. Also expressed in the peripheral nervous system and in non-neuronal tissues such as the dura and some epithelia including the acid-secreting epithelium of the stomach and the duodenal epithelium. In the embryonic retina, expression is restricted to the neuronal cell layer and the retinal pigment epithelium. In terms of tissue distribution, expressed at high levels in brain and at low levels in the pituitary, testis, kidney and ileum. Also expressed in pancreatic islets.

The protein resides in the basolateral cell membrane. The protein localises to the apical cell membrane. It is found in the cell projection. It localises to the dendrite. Its subcellular location is the axon. The protein resides in the perikaryon. The protein localises to the presynapse. It is found in the postsynapse. The catalysed reaction is 2 hydrogencarbonate(out) + chloride(in) + Na(+)(out) = 2 hydrogencarbonate(in) + chloride(out) + Na(+)(in). Its activity is regulated as follows. Zinc-binding negatively regulates its activity. Its function is as follows. Sodium/bicarbonate cotransporter which plays an important role in regulating intracellular pH. Has been shown to act as a sodium/bicarbonate cotransporter in exchange for intracellular chloride. Has also been shown to act as a sodium/biocarbonate cotransporter which is not responsible for net efflux of chloride, with the observed chloride efflux being due to chloride self-exchange. Controls neuronal pH and may contribute to the secretion of cerebrospinal fluid. Acting on presynaptic intracellular pH, it promotes GABA release, reduces the excitability of CA1 pyramidal neurons, and modulates short-term synaptic plasticity. Required in retinal cells to maintain normal pH which is necessary for normal vision. In the kidney, likely to mediate bicarbonate reclamation in the apical membrane of the proximal tubules. Functionally, sodium/bicarbonate cotransporter which mediates cotransport of sodium and bicarbonate in association with an efflux of intracellular chloride. The sequence is that of Sodium-driven chloride bicarbonate exchanger from Mus musculus (Mouse).